The sequence spans 365 residues: Zinc finger TRAF-type-containing protein 1-B (365 aa).

Residues 1–56 (MSEEREAPGPLASSSAGLGAEVGQEEVPGGAGPARLLLLPSDSDGPPKKRLRSEAE) are disordered. The RING-type; degenerate zinc finger occupies 72–117 (CAVCLDLPKASVYQCTNGHLMCAGCFIHLLADARLKEEQATCPNCR). The segment at 113-186 (CPNCRCEISK…PWQGPYHELT (74 aa)) adopts a TRAF-type zinc-finger fold.

The protein belongs to the ZFTRAF1 family. As to quaternary structure, interacts with LGALS3.

The protein localises to the cytoplasm. The polypeptide is Zinc finger TRAF-type-containing protein 1-B (Xenopus laevis (African clawed frog)).